A 570-amino-acid chain; its full sequence is Periplasmic trehalase (570 aa).

Residues 1–34 (MIPPEIRRSVLLQKAIKLALAGTLLTFASFSATA) form the signal peptide. Residues Arg-159, 166 to 167 (WD), Asn-203, 212 to 214 (RSQ), 284 to 286 (RPE), and Gly-317 contribute to the substrate site. Residues Asp-319 and Glu-503 each act as proton donor/acceptor in the active site. Glu-518 is a binding site for substrate. Positions 545-570 (PCDSVPSTRPASLSATPTKTPSAATQ) are disordered. Positions 554-570 (PASLSATPTKTPSAATQ) are enriched in low complexity.

Belongs to the glycosyl hydrolase 37 family. In terms of assembly, monomer.

Its subcellular location is the periplasm. It carries out the reaction alpha,alpha-trehalose + H2O = alpha-D-glucose + beta-D-glucose. Functionally, provides the cells with the ability to utilize trehalose at high osmolarity by splitting it into glucose molecules that can subsequently be taken up by the phosphotransferase-mediated uptake system. This chain is Periplasmic trehalase, found in Salmonella agona (strain SL483).